The following is a 53-amino-acid chain: Minor histocompatibility protein HMSD variant form (53 aa).

ACC-6 forms a complex with MHC HLA-B*4403. In terms of tissue distribution, highly expressed in dendritic cells and primary leukemia cells, especially those of myeloid lineage. ACC-6 expression is limited to cells of the hematopoietic lineage.

This splice variant of HMSD is the precursor of the histocompatibility antigen ACC-6. More generally, minor histocompatibility antigens (mHags) refer to immunogenic peptide which, when complexed with MHC, can generate an immune response after recognition by specific T-cells. The peptides are derived from polymorphic intracellular proteins, which are cleaved by normal pathways of antigen processing. The binding of these peptides to MHC class I or class II molecules and its expression on the cell surface can stimulate T-cell responses and thereby trigger graft rejection or graft-versus-host disease (GVHD) after hematopoietic stem cell transplantation from HLA-identical sibling donor. GVHD is a frequent complication after bone marrow transplantation (BMT), due to mismatch of minor histocompatibility antigen in HLA-matched sibling marrow transplants. However, associated with GVHD, a favorable graft-versus-leukemia (GVL) can be induced by donor-recipient disparities in mHags. ACC-6 is presented to the cell surface by MHC HLA-B*4403. This complex specifically elicits donor-cytotoxic T-lymphocyte (CTL) reactivity against hematologic malignancies after treatment by HLA-identical allogenic BMT. It induces cell recognition and lysis by CTL. Immunogenicity of most autosomal mHags results from single-nucleotide polymorphisms that cause amino-acid substitutions within epitopes, leading to the differential recognition of peptides between donor and recipient. This is Minor histocompatibility protein HMSD variant form (HMSD) from Homo sapiens (Human).